A 185-amino-acid chain; its full sequence is Prenylated Rab acceptor protein 1 (185 aa).

Residues 1 to 78 (MAAQKDQQKD…RNVEYYQSNY (78 aa)) are Cytoplasmic-facing. A required for interaction with prenylated RAB3A and VAMP2 region spans residues 30-54 (AGREWLERRRATIRPWGTFVDQQRF). A run of 2 helical transmembrane segments spans residues 79 to 94 (VFVF…VTSP) and 95 to 112 (MLLV…ILYL). Topologically, residues 113–131 (RTLQSKLVLFGREVSPAHQ) are cytoplasmic. 2 helical membrane passes run 132–148 (YALA…LAGA) and 149–165 (GSAV…LIGS). Residues 165–185 (SHAAFHQMEPADGEELQMEPV) form a required for interaction with GDI1 region. Residues 166 to 185 (HAAFHQMEPADGEELQMEPV) lie on the Cytoplasmic side of the membrane. Residues 175–185 (ADGEELQMEPV) are required for interaction with prenylated RAB3A and VAMP2. A homodimerization region spans residues 175-185 (ADGEELQMEPV).

It belongs to the PRA1 family. As to quaternary structure, homodimer. Interacts with VAMP2 (synaptobrevin-2), GDI1, NRDG1 and PCLO. Interacts with prenylated Rab proteins (including RAB5 and RAB6), and with the members of the Ras superfamily HRAS, RHOA, TC21, and RAP1A.

It is found in the cell membrane. The protein localises to the cytoplasm. Its subcellular location is the golgi apparatus. It localises to the cytoplasmic vesicle. The protein resides in the secretory vesicle. It is found in the synaptic vesicle. In terms of biological role, general Rab protein regulator required for vesicle formation from the Golgi complex. May control vesicle docking and fusion by mediating the action of Rab GTPases to the SNARE complexes. In addition it inhibits the removal of Rab GTPases from the membrane by GDI1. The chain is Prenylated Rab acceptor protein 1 (Rabac1) from Mus musculus (Mouse).